Consider the following 447-residue polypeptide: METSQITETINMVSEEHLDIRTVTMGISLLDTVAGTPQETAKNIYHKITTYAKNLVAVAQQIEREFGIPITNKRISVTPIALIAGKATPDDMLYYAHALDDAAKAVGVDFIGGYSALVQKGFANGDLALIKSMPRALTETDLVMSSVNIGSSKAGINLDAVKLMGETIKAITDKSDTANAKLVVFANAVEDNPFMAGAFHGVTEADVVINVGVSGPGVVKRALEKVKGEPIQIVAETVKKTAFKITRVGQMVGALAAERLGVEFGIVDLSLAPTPARGDSVAEVLEEIGLEMVGTHGTTAALMLLNDAVKKGGVMASQRVGGLSGAFIPVSEDAGMIDAVEAGILSLAKLEAMTSVCSVGLDMIAVPGDTEATTISAMIADEAAIGVQNNKTTAVRILPTNGTKVGDMVDYGGLLGTAPVMPVVPKSSADFINRGGHIPAPIHSFKN.

This sequence belongs to the UPF0210 family. As to quaternary structure, homodimer.

The chain is UPF0210 protein LCK_00974 from Leuconostoc citreum (strain KM20).